A 216-amino-acid polypeptide reads, in one-letter code: Ribonuclease HII (216 aa).

Residues 27–216 (ASLAGVDEAG…VKEHVKNCEG (190 aa)) form the RNase H type-2 domain. Asp-33, Glu-34, and Asp-125 together coordinate a divalent metal cation.

It belongs to the RNase HII family. It depends on Mn(2+) as a cofactor. Mg(2+) is required as a cofactor.

It localises to the cytoplasm. The catalysed reaction is Endonucleolytic cleavage to 5'-phosphomonoester.. Functionally, endonuclease that specifically degrades the RNA of RNA-DNA hybrids. The polypeptide is Ribonuclease HII (Geotalea daltonii (strain DSM 22248 / JCM 15807 / FRC-32) (Geobacter daltonii)).